The sequence spans 582 residues: Sulfite reductase [NADPH] hemoprotein beta-component (582 aa).

Residues methionine 1–aspartate 12 are compositionally biased toward basic and acidic residues. The tract at residues methionine 1–leucine 26 is disordered. The [4Fe-4S] cluster site is built by cysteine 447, cysteine 453, cysteine 492, and cysteine 496. Cysteine 496 lines the siroheme pocket.

The protein belongs to the nitrite and sulfite reductase 4Fe-4S domain family. In terms of assembly, alpha(8)-beta(8). The alpha component is a flavoprotein, the beta component is a hemoprotein. The cofactor is siroheme. Requires [4Fe-4S] cluster as cofactor.

It catalyses the reaction hydrogen sulfide + 3 NADP(+) + 3 H2O = sulfite + 3 NADPH + 4 H(+). It functions in the pathway sulfur metabolism; hydrogen sulfide biosynthesis; hydrogen sulfide from sulfite (NADPH route): step 1/1. Its function is as follows. Component of the sulfite reductase complex that catalyzes the 6-electron reduction of sulfite to sulfide. This is one of several activities required for the biosynthesis of L-cysteine from sulfate. This chain is Sulfite reductase [NADPH] hemoprotein beta-component, found in Afipia carboxidovorans (strain ATCC 49405 / DSM 1227 / KCTC 32145 / OM5) (Oligotropha carboxidovorans).